Consider the following 111-residue polypeptide: MADWTRAQSSGAVEEIVDRENKRMADSLASKVTRLKSLALDIDRDTEDQNRYLDGMDSDFTSVTGLLTGSVKRFSTVARSGRDTRKLLCGMAVVLIVAFFILSYLFSRTRT.

The Cytoplasmic portion of the chain corresponds to 1–86 (MADWTRAQSS…VARSGRDTRK (86 aa)). 2 positions are modified to phosphoserine: Ser-9 and Ser-37. Residues 15-77 (EIVDRENKRM…TGSVKRFSTV (63 aa)) form the t-SNARE coiled-coil homology domain. The helical; Anchor for type IV membrane protein transmembrane segment at 87–107 (LLCGMAVVLIVAFFILSYLFS) threads the bilayer. Over 108 to 111 (RTRT) the chain is Vesicular.

As to quaternary structure, component of a SNARE complex consisting of STX5, YKT6, GOSR1 and BET1L. Interacts with STX5. Widely expressed. Highest levels in heart, liver, skeletal muscle and kidney.

The protein localises to the golgi apparatus membrane. Its subcellular location is the golgi apparatus. It localises to the trans-Golgi network membrane. Its function is as follows. Vesicle SNARE required for targeting and fusion of retrograde transport vesicles with the Golgi complex. Required for the integrity of the Golgi complex. This is BET1-like protein from Rattus norvegicus (Rat).